The following is a 21-amino-acid chain: Tertiapin (21 aa).

Disulfide bonds link Cys3–Cys14 and Cys5–Cys18.

Post-translationally, oxidation of Met-13 results in the loss of biological activity. In terms of processing, an amidation at Lys-21 is suggested in Ref.1. As to expression, expressed by the venom gland.

It is found in the secreted. Functionally, presynaptic neurotoxin that blocks the inwardly rectifying Kir1.1/KCNJ1 and Kir3.1/3.4 (KCNJ3/KCNJ5) potassium channels with high affinity by binding to the M1-M2 linker region of these channels in a 1:1 stoichiometry. It may block the potassium channel pore by occluding its alpha helix into the channel vestibule. Tertiapin-Q also inhibits calcium-activated large conductance BK-type (KCNMA) potassium channels in a concentration-, and voltage-dependent manner, in addition to inhibiting Kir3.1/3.2 (KCNJ3/KCNJ6) heteromultimers potassium channels. It can prevent dose-dependently acetylcholine(ACh)-induced atrioventricular blocks in mammalian hearts, as KCNJ3/KCNJ5 channels (also named I(KACh), because these channels are activated by ACh) are found in mammalian myocytes. Interacts specifically with calmodulin in the presence of calcium. This is Tertiapin from Apis mellifera (Honeybee).